The sequence spans 217 residues: Guanylate kinase (217 aa).

The Guanylate kinase-like domain maps to 15 to 194; it reads GLMLVLSSPS…AYQRLKRILL (180 aa). ATP is bound at residue 22–29; that stretch reads SPSGAGKT.

It belongs to the guanylate kinase family.

The protein resides in the cytoplasm. It carries out the reaction GMP + ATP = GDP + ADP. Functionally, essential for recycling GMP and indirectly, cGMP. This Hyphomonas neptunium (strain ATCC 15444) protein is Guanylate kinase.